A 285-amino-acid chain; its full sequence is Lipoyl synthase (285 aa).

Cysteine 36, cysteine 41, cysteine 47, cysteine 62, cysteine 66, cysteine 69, and serine 275 together coordinate [4Fe-4S] cluster. The 217-residue stretch at 48–264 folds into the Radical SAM core domain; that stretch reads FSKKTATFLI…KEYAISIGFK (217 aa).

This sequence belongs to the radical SAM superfamily. Lipoyl synthase family. [4Fe-4S] cluster serves as cofactor.

The protein resides in the cytoplasm. It carries out the reaction [[Fe-S] cluster scaffold protein carrying a second [4Fe-4S](2+) cluster] + N(6)-octanoyl-L-lysyl-[protein] + 2 oxidized [2Fe-2S]-[ferredoxin] + 2 S-adenosyl-L-methionine + 4 H(+) = [[Fe-S] cluster scaffold protein] + N(6)-[(R)-dihydrolipoyl]-L-lysyl-[protein] + 4 Fe(3+) + 2 hydrogen sulfide + 2 5'-deoxyadenosine + 2 L-methionine + 2 reduced [2Fe-2S]-[ferredoxin]. It participates in protein modification; protein lipoylation via endogenous pathway; protein N(6)-(lipoyl)lysine from octanoyl-[acyl-carrier-protein]: step 2/2. Its function is as follows. Catalyzes the radical-mediated insertion of two sulfur atoms into the C-6 and C-8 positions of the octanoyl moiety bound to the lipoyl domains of lipoate-dependent enzymes, thereby converting the octanoylated domains into lipoylated derivatives. This chain is Lipoyl synthase, found in Caldicellulosiruptor saccharolyticus (strain ATCC 43494 / DSM 8903 / Tp8T 6331).